Reading from the N-terminus, the 202-residue chain is Small ribosomal subunit protein uS4 (202 aa).

The S4 RNA-binding domain occupies 94-157; sequence SRLDNLVYRM…KDLPIVAAGA (64 aa).

Belongs to the universal ribosomal protein uS4 family. In terms of assembly, part of the 30S ribosomal subunit. Contacts protein S5. The interaction surface between S4 and S5 is involved in control of translational fidelity.

Its function is as follows. One of the primary rRNA binding proteins, it binds directly to 16S rRNA where it nucleates assembly of the body of the 30S subunit. Functionally, with S5 and S12 plays an important role in translational accuracy. This Malacoplasma penetrans (strain HF-2) (Mycoplasma penetrans) protein is Small ribosomal subunit protein uS4.